The primary structure comprises 21 residues: Major outer membrane protein (21 aa).

As to quaternary structure, disulfide bond interactions within and between MOMP molecules and other components form high molecular-weight oligomers.

It localises to the cell outer membrane. Its function is as follows. Structural rigidity of the outer membrane of elementary bodies and porin forming, permitting diffusion of solutes through the intracellular reticulate body membrane. The protein is Major outer membrane protein of Actinobacillus suis.